The sequence spans 660 residues: Pseudouridylate synthase 7 homolog (660 aa).

A disordered region spans residues 1 to 99 (MEMTSTSLKR…EAGEEEEAES (99 aa)). Ser-7 carries the phosphoserine modification. A compositionally biased stretch (basic and acidic residues) spans 22 to 32 (TPHDETKKQKV). Residues 76 to 99 (QEEEEEEEEEDGLSEAGEEEEAES) show a composition bias toward acidic residues. Phosphoserine is present on Ser-126. Asp-293 functions as the Nucleophile in the catalytic mechanism. In terms of domain architecture, TRUD spans 369–579 (GFINYYGMQR…SGAYRRIIIR (211 aa)).

It belongs to the pseudouridine synthase TruD family. Interacts with SIRT1.

The protein resides in the nucleus. It catalyses the reaction a uridine in tRNA = a pseudouridine in tRNA. The enzyme catalyses uridine(13) in tRNA = pseudouridine(13) in tRNA. It carries out the reaction a uridine in mRNA = a pseudouridine in mRNA. Pseudouridylate synthase that catalyzes pseudouridylation of RNAs. Acts as a regulator of protein synthesis in embryonic stem cells by mediating pseudouridylation of RNA fragments derived from tRNAs (tRFs): pseudouridylated tRFs inhibit translation by targeting the translation initiation complex. Also catalyzes pseudouridylation of mRNAs: mediates pseudouridylation of mRNAs with the consensus sequence 5'-UGUAG-3'. Acts as a regulator of pre-mRNA splicing by mediating pseudouridylation of pre-mRNAs at locations associated with alternatively spliced regions. Pseudouridylation of pre-mRNAs near splice sites directly regulates mRNA splicing and mRNA 3'-end processing. In addition to mRNAs and tRNAs, binds other types of RNAs, such as snRNAs, Y RNAs and vault RNAs, suggesting that it can catalyze pseudouridylation of many RNA types. The protein is Pseudouridylate synthase 7 homolog of Mus musculus (Mouse).